The sequence spans 337 residues: tRNA pseudouridine synthase D (337 aa).

Asp-77 (nucleophile) is an active-site residue. The region spanning 152–308 is the TRUD domain; the sequence is GFPNYFTEQR…ARDFHWEFVE (157 aa).

The protein belongs to the pseudouridine synthase TruD family.

It carries out the reaction uridine(13) in tRNA = pseudouridine(13) in tRNA. Functionally, responsible for synthesis of pseudouridine from uracil-13 in transfer RNAs. This chain is tRNA pseudouridine synthase D, found in Mannheimia succiniciproducens (strain KCTC 0769BP / MBEL55E).